We begin with the raw amino-acid sequence, 100 residues long: Putative membrane protein insertion efficiency factor (100 aa).

This sequence belongs to the UPF0161 family.

It localises to the cell membrane. Could be involved in insertion of integral membrane proteins into the membrane. This chain is Putative membrane protein insertion efficiency factor, found in Enterococcus faecalis (strain ATCC 700802 / V583).